We begin with the raw amino-acid sequence, 688 residues long: DNA ligase (688 aa).

NAD(+)-binding positions include Asp-42–Asp-46, Ser-91–Leu-92, and Glu-128. The N6-AMP-lysine intermediate role is filled by Lys-130. Positions 151, 188, 305, and 329 each coordinate NAD(+). Residues Cys-423, Cys-426, Cys-441, and Cys-447 each contribute to the Zn(2+) site. Residues Ala-608–Leu-688 enclose the BRCT domain.

It belongs to the NAD-dependent DNA ligase family. LigA subfamily. It depends on Mg(2+) as a cofactor. Mn(2+) is required as a cofactor.

It catalyses the reaction NAD(+) + (deoxyribonucleotide)n-3'-hydroxyl + 5'-phospho-(deoxyribonucleotide)m = (deoxyribonucleotide)n+m + AMP + beta-nicotinamide D-nucleotide.. Functionally, DNA ligase that catalyzes the formation of phosphodiester linkages between 5'-phosphoryl and 3'-hydroxyl groups in double-stranded DNA using NAD as a coenzyme and as the energy source for the reaction. It is essential for DNA replication and repair of damaged DNA. This chain is DNA ligase, found in Paraburkholderia xenovorans (strain LB400).